Reading from the N-terminus, the 393-residue chain is MTTLGTALTPKATKVMMLGSGELGKEVVIELQRLGVEVIAVDRYKNAPAQQVAHRSYTISMLDGEALKALVEKERPDYIVPEVEAIATATLVELEQKGFTVVPTAKATQLTMNREGIRRLAAEELGLPTSNYQFVDNFTDFKSAVENIGIPCVVKPIMSSSGHGQSIIKSFDQIQQAWDYAQQGGRAGAGRVIVEGFVKFDYEITLLTVRHIGGTSFLAPIGHRQQNGDYRESWQPQAMSEIALQKAQQVAEKITSALGGRGIFGVEMFVCGDEVIFNEVSPRPHDTGMVTLISQELSEFALHARAILGLPIPEINLISPAASKAIVVEGKSTQVQFGNLEQVLAEPNTNIRLFGKTEVDGHRRMGVILSRDISVEKALEKAFRAYDKLEINL.

N(1)-(5-phospho-beta-D-ribosyl)glycinamide-binding positions include 22-23 and glutamate 82; that span reads EL. Residues arginine 114, lysine 155, 160–165, 195–198, and glutamate 203 each bind ATP; these read SSGHGQ and EGFV. One can recognise an ATP-grasp domain in the interval 119–308; sequence RLAAEELGLP…EFALHARAIL (190 aa). Mg(2+) is bound by residues glutamate 267 and glutamate 279. N(1)-(5-phospho-beta-D-ribosyl)glycinamide contacts are provided by residues aspartate 286, lysine 356, and 363 to 364; that span reads RR.

Belongs to the PurK/PurT family. Homodimer.

It catalyses the reaction N(1)-(5-phospho-beta-D-ribosyl)glycinamide + formate + ATP = N(2)-formyl-N(1)-(5-phospho-beta-D-ribosyl)glycinamide + ADP + phosphate + H(+). Its pathway is purine metabolism; IMP biosynthesis via de novo pathway; N(2)-formyl-N(1)-(5-phospho-D-ribosyl)glycinamide from N(1)-(5-phospho-D-ribosyl)glycinamide (formate route): step 1/1. Involved in the de novo purine biosynthesis. Catalyzes the transfer of formate to 5-phospho-ribosyl-glycinamide (GAR), producing 5-phospho-ribosyl-N-formylglycinamide (FGAR). Formate is provided by PurU via hydrolysis of 10-formyl-tetrahydrofolate. This Mannheimia succiniciproducens (strain KCTC 0769BP / MBEL55E) protein is Formate-dependent phosphoribosylglycinamide formyltransferase.